Here is a 317-residue protein sequence, read N- to C-terminus: SVP1-like protein 2 (317 aa).

WD repeat units lie at residues A119–E159 and V164–Y203.

This sequence belongs to the WD repeat PROPPIN family.

The protein resides in the vacuole membrane. The protein localises to the cytoplasmic vesicle membrane. In terms of biological role, involved in mitochondrial or peroxisomal functions and amino acid signaling pathways. The protein is SVP1-like protein 2 (hsv2) of Emericella nidulans (strain FGSC A4 / ATCC 38163 / CBS 112.46 / NRRL 194 / M139) (Aspergillus nidulans).